Consider the following 955-residue polypeptide: MEKIYNPKHIEESLYFFWEKNGFFKPNHLEKSTFCIMMPPPNITGSLHMGHAFQQTIMDILIRYHRMQGKNTFWQVGTDHAGIATQILVERQIFEKEQKTKKDYSRDDFIKKIWEWKKQSSNIITKQMRRLGISVDWDYEKFTLDPDISNSVREAFIILYKNNLIYQKKKLVHWDSKLETVISDLEVEHRLIKGKKWFIRYPIIENDMSLRSKVKYLIVSTTRPETLLGDTAIAVNPEDYKYNQFIGNHVSCPLTNRIIPIIKDRYADLEKGTGCVKITPAHDFNDYKVGLHHKLPMINIFTFDGRIKSTAEVYNYKGEKSNQYSTCIPMQFQHLDILSARIEIIKEITKLGFLEKIEECNVTVPYSERSGVIIEPMLTNQWYLKTSTLAKVALNAVKDKKIKFIPQQYESMYSSWMNNIEDWCISRQLWWGHRIPVWYDDQKNIYIGQNEKEIRQAYSISENVLLKQENDVLDTWFSSGLWTFSSLGWPKKTTFLKTFHPTNVLVSGFDIIFFWIARMIMLTMYFMKDKHNNPEVPFKNIYITGLIRDEFGKKMSKSKGNVIDPLDMIDGISLSELIKKRTNNLLQPNLSDKIIQRTIKQFPEGIKSTGTDALRFTFSALASSTRDIQWDMNRLKGYRNFCNKLWNASRFVLINTQDHNFSKFDVKRKMLLINKWILIEFNNTVKLYRESLDTYRFDIAANILYDFIWNIFCDWYLEFVKIVIKLGSSKEVYCTKNVLVYVLELLLKLAHPIMPFITETIWQRIKLIQNISEKTIMLQDFPEYNHKLFDKKILVQMNWMKKIIVFLRNIRTNMNVSSTKLLPLFLYNINSEQEKVIKENISLIKNISFLDKITILSEKYDKDLCIKEIIDGAEIIIPILKLVDTKVELKRLVKEQKKTELNIFKIKTKILNKDFLSYAPTKIVTQEKNKLLKLNEINLKLSEQIKIFRNMSYKK.

Positions 41–51 (PNITGSLHMGH) match the 'HIGH' region motif. The 'KMSKS' region signature appears at 554 to 558 (KMSKS). Lys-557 contributes to the ATP binding site. Residues 926-946 (QEKNKLLKLNEINLKLSEQIK) are a coiled coil.

It belongs to the class-I aminoacyl-tRNA synthetase family. ValS type 1 subfamily. In terms of assembly, monomer.

It localises to the cytoplasm. It carries out the reaction tRNA(Val) + L-valine + ATP = L-valyl-tRNA(Val) + AMP + diphosphate. Functionally, catalyzes the attachment of valine to tRNA(Val). As ValRS can inadvertently accommodate and process structurally similar amino acids such as threonine, to avoid such errors, it has a 'posttransfer' editing activity that hydrolyzes mischarged Thr-tRNA(Val) in a tRNA-dependent manner. This is Valine--tRNA ligase from Buchnera aphidicola subsp. Acyrthosiphon pisum (strain APS) (Acyrthosiphon pisum symbiotic bacterium).